The chain runs to 466 residues: Asparagine--tRNA ligase (466 aa).

The protein belongs to the class-II aminoacyl-tRNA synthetase family. In terms of assembly, homodimer.

The protein localises to the cytoplasm. It catalyses the reaction tRNA(Asn) + L-asparagine + ATP = L-asparaginyl-tRNA(Asn) + AMP + diphosphate + H(+). The polypeptide is Asparagine--tRNA ligase (Shewanella oneidensis (strain ATCC 700550 / JCM 31522 / CIP 106686 / LMG 19005 / NCIMB 14063 / MR-1)).